Here is a 355-residue protein sequence, read N- to C-terminus: Mannonate dehydratase (355 aa).

It belongs to the mannonate dehydratase family. Fe(2+) serves as cofactor. Mn(2+) is required as a cofactor.

The enzyme catalyses D-mannonate = 2-dehydro-3-deoxy-D-gluconate + H2O. It participates in carbohydrate metabolism; pentose and glucuronate interconversion. Functionally, catalyzes the dehydration of D-mannonate. The chain is Mannonate dehydratase from Brachyspira hyodysenteriae (strain ATCC 49526 / WA1).